Consider the following 212-residue polypeptide: ATP-dependent Clp protease proteolytic subunit 2 (212 aa).

The segment at 1-20 is disordered; sequence MSHNTSIASQGMPAMAGPET. Residue serine 107 is the Nucleophile of the active site. Residue histidine 132 is part of the active site.

The protein belongs to the peptidase S14 family. Fourteen ClpP subunits assemble into 2 heptameric rings which stack back to back to give a disk-like structure with a central cavity, resembling the structure of eukaryotic proteasomes.

The protein resides in the cytoplasm. It catalyses the reaction Hydrolysis of proteins to small peptides in the presence of ATP and magnesium. alpha-casein is the usual test substrate. In the absence of ATP, only oligopeptides shorter than five residues are hydrolyzed (such as succinyl-Leu-Tyr-|-NHMec, and Leu-Tyr-Leu-|-Tyr-Trp, in which cleavage of the -Tyr-|-Leu- and -Tyr-|-Trp bonds also occurs).. In terms of biological role, cleaves peptides in various proteins in a process that requires ATP hydrolysis. Has a chymotrypsin-like activity. Plays a major role in the degradation of misfolded proteins. The protein is ATP-dependent Clp protease proteolytic subunit 2 of Cutibacterium acnes (strain DSM 16379 / KPA171202) (Propionibacterium acnes).